The chain runs to 59 residues: GEIECSSSECCPSGKHLCKGGFVHYCCPNDRYMSCGILGFGTCYCWKADYYEYGSTPTC.

In terms of processing, contains 5 disulfide bonds.

It is found in the secreted. It localises to the nematocyst. The protein is U-actitoxin-Aer2a of Anemonia erythraea (Sea anemone).